Here is a 194-residue protein sequence, read N- to C-terminus: Probable RNA 2'-phosphotransferase (194 aa).

It belongs to the KptA/TPT1 family.

Functionally, removes the 2'-phosphate from RNA via an intermediate in which the phosphate is ADP-ribosylated by NAD followed by a presumed transesterification to release the RNA and generate ADP-ribose 1''-2''-cyclic phosphate (APPR&gt;P). May function as an ADP-ribosylase. The chain is Probable RNA 2'-phosphotransferase from Burkholderia lata (strain ATCC 17760 / DSM 23089 / LMG 22485 / NCIMB 9086 / R18194 / 383).